The primary structure comprises 160 residues: Transcription antitermination protein NusB (160 aa).

It belongs to the NusB family.

Its function is as follows. Involved in transcription antitermination. Required for transcription of ribosomal RNA (rRNA) genes. Binds specifically to the boxA antiterminator sequence of the ribosomal RNA (rrn) operons. The chain is Transcription antitermination protein NusB from Sinorhizobium medicae (strain WSM419) (Ensifer medicae).